The chain runs to 362 residues: MSTASVMDLVRDDLRAFAGYASARTSALQGDVWLNANESAWGNPADPDASTRRYPDPQPKGLRAALAQLYGCAPEQLLIGRGSDEAIDLLVRGLCVPERDAVVVTPPVFGMYAVCARLQNAPLVEVPLVDGADGLHADVPAIVQAALDAKAKLVFLCSPSNPAGSAIPLAEIEAALQALQGKAVVVVDEAYGEFSDVPSAIGLLARYDNLAVLRTLSKAHALAAARIGSLIANAELIALLRRCQAPYPVPTPCAVMAEQALSAPALAVTQRRVTEIRAERARLHAALVQVAGVRQVYPSQGNFLLVRFDDAEAAFQALLEAGVVVRDQRAVPRLSDALRITIGTPDQNDRVLGALQRKQEAA.

The residue at position 218 (K218) is an N6-(pyridoxal phosphate)lysine.

This sequence belongs to the class-II pyridoxal-phosphate-dependent aminotransferase family. Histidinol-phosphate aminotransferase subfamily. In terms of assembly, homodimer. Pyridoxal 5'-phosphate is required as a cofactor.

It carries out the reaction L-histidinol phosphate + 2-oxoglutarate = 3-(imidazol-4-yl)-2-oxopropyl phosphate + L-glutamate. Its pathway is amino-acid biosynthesis; L-histidine biosynthesis; L-histidine from 5-phospho-alpha-D-ribose 1-diphosphate: step 7/9. This chain is Histidinol-phosphate aminotransferase, found in Xanthomonas campestris pv. campestris (strain 8004).